Here is a 641-residue protein sequence, read N- to C-terminus: Bifunctional protein glk (641 aa).

The interval 1-340 (MSTGAQTKAA…QLSNRTGGAS (340 aa)) is glucokinase. 23-28 (ADVGGT) contacts ATP. Positions 341-417 (SAVFERIRQM…LKLATGLTGT (77 aa)) constitute an HTH rpiR-type domain. Positions 341 to 641 (SAVFERIRQM…SHGAAPAAKD (301 aa)) are putative HTH-type transcriptional regulator. A DNA-binding region (H-T-H motif) is located at residues 377 to 396 (IVNIARKADVSQPTVIRFCR). The region spanning 461–600 (AIDILNNARR…AVGVAIRRAA (140 aa)) is the SIS domain. Residues 576 to 596 (SMISRILHLVMIDILAVGVAI) form a helical membrane-spanning segment.

It in the N-terminal section; belongs to the bacterial glucokinase family.

The protein localises to the membrane. It catalyses the reaction D-glucose + ATP = D-glucose 6-phosphate + ADP + H(+). In Burkholderia mallei (strain ATCC 23344), this protein is Bifunctional protein glk (glk).